The sequence spans 308 residues: Follistatin-related protein 1 (308 aa).

Residues 1–20 (MWKRWLALALALVAVAWVRA) form the signal peptide. The Follistatin-like domain occupies 30-53 (ICANVFCGAGRECAVTEKGEPTCL). 5 cysteine pairs are disulfide-bonded: C31/C42, C36/C52, C54/C84, C58/C77, and C66/C98. A Kazal-like domain is found at 48 to 100 (GEPTCLCIEQCKPHKRPVCGSNGKTYLNHCELHRDACLTGSKIQVDYDGHCKE). N-linked (GlcNAc...) asparagine glycosylation occurs at N144. In terms of domain architecture, EF-hand 1 spans 144–178 (NYSEILDKYFKNFDNGDSRLDSSEFLKFVEQNETA). S165 bears the Phosphoserine mark. N-linked (GlcNAc...) asparagine glycosylation is found at N175 and N180. Positions 193–228 (LRGLCVDALIELSDENADWKLSFQEFLKCLNPSFNP) constitute an EF-hand 2 domain. The 55-residue stretch at 233–287 (CALEDETYADGAETEVDCNRCVCACGNWVCTAMTCDGKNQKGAQTQTEEEMTRYV) folds into the VWFC domain.

Homodimer. Interacts with SCN10A. Interacts with DIP2A; DIP2A may act as a cell surface receptor for FSTL1. Interacts with BMP4. Interacts with CD14; this interaction promotes TL4-mediated signaling cascade.

The protein resides in the secreted. Functionally, secreted glycoprotein that is involved in various physiological processes, such as angiogenesis, regulation of the immune response, cell proliferation and differentiation. Plays a role in the development of the central nervous system, skeletal system, lungs, and ureter. Promotes endothelial cell survival, migration and differentiation into network structures in an AKT-dependent manner. Also promotes survival of cardiac myocytes. Initiates various signaling cascades by activating different receptors on the cell surface such as DIP2A, TLR4 or BMP receptors. The sequence is that of Follistatin-related protein 1 (FSTL1) from Macaca fascicularis (Crab-eating macaque).